A 220-amino-acid chain; its full sequence is VQ motif-containing protein 5 (220 aa).

The VQ motif lies at 49 to 57 (FKSLVQQLT). Disordered regions lie at residues 61–80 (PCDR…PEPI) and 131–171 (HMMA…GASS). Polar residues-rich tracts occupy residues 133-150 (MAQS…QSNG) and 157-171 (SWFN…GASS).

The protein resides in the nucleus. Functionally, may function as negative regulator of plant defense. This Arabidopsis thaliana (Mouse-ear cress) protein is VQ motif-containing protein 5.